A 266-amino-acid polypeptide reads, in one-letter code: Interleukin-1 beta (266 aa).

Residues 1–114 constitute a propeptide that is removed on maturation; it reads MAAVPELSSE…DTWDEEYESD (114 aa).

This sequence belongs to the IL-1 family. In terms of assembly, monomer. In its precursor form, weakly interacts with full-length MEFV; the mature cytokine does not interact at all. Interacts with integrins ITGAV:ITGBV and ITGA5:ITGB1; integrin-binding is required for IL1B signaling. Interacts with cargo receptor TMED10; the interaction is direct and is required for the secretion of IL1B mature form. Interacts with HSP90AB1; the interaction facilitates cargo translocation into the ERGIC. Interacts with HSP90B1; the interaction facilitates cargo translocation into the ERGIC.

Its subcellular location is the cytoplasm. It localises to the cytosol. It is found in the secreted. The protein resides in the lysosome. The protein localises to the extracellular exosome. Potent pro-inflammatory cytokine. Initially discovered as the major endogenous pyrogen, induces prostaglandin synthesis, neutrophil influx and activation, T-cell activation and cytokine production, B-cell activation and antibody production, and fibroblast proliferation and collagen production. Promotes Th17 differentiation of T-cells. Synergizes with IL12/interleukin-12 to induce IFNG synthesis from T-helper 1 (Th1) cells. Plays a role in angiogenesis by inducing VEGF production synergistically with TNF and IL6. Involved in transduction of inflammation downstream of pyroptosis: its mature form is specifically released in the extracellular milieu by passing through the gasdermin-D (GSDMD) pore. The sequence is that of Interleukin-1 beta (IL1B) from Cavia porcellus (Guinea pig).